An 814-amino-acid chain; its full sequence is MKKTTITLFVLTSVFHSGNVFSRQYNFDYGSLSLPPGENASFLSVETLPGNYVVDVYLNNQLKETTELYFKSMTQTLEPCLTKEKLIKYGIAIQELHGLQFDNEQCVLLEHSPLKYTYNAANQSLLLNAPSKILSPIDSEIADENIWDDGINAFLLNYRANYLHSKVGGEDSYFGQIQPGFNFGPWRLRNLSSWQNLSSEKKFESAYIYAERGLKKIKSKLTVGDKYTSADLFDSVPFRGFSLNKDESMIPFSQRTYYPTIRGIAKTNATVEVRQNGYLIYSTSVPPGQFEIGREQIADLGVGVGVLDVSIYEKNGQVQNYTVPYSTPVLSLPDGYSKYSVTIGRYREVNNDYIDPVFFEGTYIYGLPYGFTLFGGVQWVNIYNSYAIGASKDIGEYGALSFDWKTSVSKTDTSNENGHAYGIRYNKNIAQTNTEVSLASHYYYSKNYRTFSEAIHSSEHDEFYDKNKKSTTSMLLSQALGSLGSVNLSYNYDKYWKHEGKKSIIASYGKNLNGVSLSLSYTKSTSKISEENEDLFSFLLSVPLQKLTNHEMYATYQNSSSSKHDMNHDLGITGVAFNSQLTWQARGQIEDKSKNQKATFLNASWRGTYGEIGANYSHNEINRDIGMNVSGGVIAHSSGITFGQSISDTAALVEAKGVSGAKVLGLPGVRTDFRGYTISSYLTPYMNNFISIDPTTLPINTDIRQTDIQVVPTEGAIVKAVYKTSVGTNALIRITRTNGKPLALGTVLSLKNNDGVIQSTSIVGEDGQAYVSGLSGVQKLIASWGNKPSDTCTVFYSLPDKNKGQISFLNGVCK.

The N-terminal stretch at Met-1–Gly-30 is a signal peptide. Cys-792 and Cys-813 are joined by a disulfide.

It belongs to the fimbrial export usher family.

Its subcellular location is the cell outer membrane. Its function is as follows. Involved in the export and assembly of the SefA fimbrial subunit. This Salmonella enteritidis protein is Outer membrane usher protein SefC (sefC).